The following is a 182-amino-acid chain: Vomeronasal secretory protein 1 (182 aa).

An N-terminal signal peptide occupies residues 1-18 (MRALLLIISFCLVAVLQA). N30 carries an N-linked (GlcNAc...) asparagine glycan. A disulfide bond links C76 and C168.

Belongs to the calycin superfamily. Lipocalin family. As to expression, specifically expressed in vomeronasal and posterior glands of the nasal septum, the ducts of which open into the lumen of the vomeronasal organ.

The protein localises to the secreted. Transport of lipophilic molecules, possible pheromone-carrier. This Mus musculus (Mouse) protein is Vomeronasal secretory protein 1 (Lcn3).